A 375-amino-acid polypeptide reads, in one-letter code: Anhydro-N-acetylmuramic acid kinase (375 aa).

18-25 (GTSMDGID) is a binding site for ATP.

Belongs to the anhydro-N-acetylmuramic acid kinase family.

It catalyses the reaction 1,6-anhydro-N-acetyl-beta-muramate + ATP + H2O = N-acetyl-D-muramate 6-phosphate + ADP + H(+). It functions in the pathway amino-sugar metabolism; 1,6-anhydro-N-acetylmuramate degradation. The protein operates within cell wall biogenesis; peptidoglycan recycling. Its function is as follows. Catalyzes the specific phosphorylation of 1,6-anhydro-N-acetylmuramic acid (anhMurNAc) with the simultaneous cleavage of the 1,6-anhydro ring, generating MurNAc-6-P. Is required for the utilization of anhMurNAc either imported from the medium or derived from its own cell wall murein, and thus plays a role in cell wall recycling. This is Anhydro-N-acetylmuramic acid kinase from Rhodospirillum rubrum (strain ATCC 11170 / ATH 1.1.1 / DSM 467 / LMG 4362 / NCIMB 8255 / S1).